The chain runs to 278 residues: 4-deoxy-L-threo-5-hexosulose-uronate ketol-isomerase (278 aa).

Zn(2+) is bound by residues His-196, His-198, Glu-203, and His-245.

The protein belongs to the KduI family. It depends on Zn(2+) as a cofactor.

It catalyses the reaction 5-dehydro-4-deoxy-D-glucuronate = 3-deoxy-D-glycero-2,5-hexodiulosonate. It functions in the pathway glycan metabolism; pectin degradation; 2-dehydro-3-deoxy-D-gluconate from pectin: step 4/5. Its function is as follows. Catalyzes the isomerization of 5-dehydro-4-deoxy-D-glucuronate to 3-deoxy-D-glycero-2,5-hexodiulosonate. The protein is 4-deoxy-L-threo-5-hexosulose-uronate ketol-isomerase of Shigella sonnei (strain Ss046).